Reading from the N-terminus, the 186-residue chain is Protein C (186 aa).

Over residues 1-15 the composition is skewed to polar residues; sequence MSKTDWNASGLSRPS. A disordered region spans residues 1–44; it reads MSKTDWNASGLSRPSPSAHWPSRKLWQHGQKYQTTQDRSEPPAG.

It belongs to the morbillivirus protein C family. Interacts with the phosphoprotein (via C-terminus); this interaction allows C to associate with the ribonucleocapsid.

The protein localises to the host nucleus. It localises to the host cytoplasmic vesicle. Ribonucleocapsid-associated protein that interacts with the phosphoprotein (P), thereby increasing replication accuracy and processivity of the polymerase complex. The chain is Protein C (P/V/C) from Homo sapiens (Human).